A 166-amino-acid polypeptide reads, in one-letter code: UPF0254 protein Mevan_0254 (166 aa).

It belongs to the UPF0254 family.

The protein is UPF0254 protein Mevan_0254 of Methanococcus vannielii (strain ATCC 35089 / DSM 1224 / JCM 13029 / OCM 148 / SB).